Here is a 122-residue protein sequence, read N- to C-terminus: Large ribosomal subunit protein uL18 (122 aa).

Positions 1-27 (MSNLSRKQQTQKRHRRLRRHLNGTAQR) are disordered. Positions 9–21 (QTQKRHRRLRRHL) are enriched in basic residues.

The protein belongs to the universal ribosomal protein uL18 family. As to quaternary structure, part of the 50S ribosomal subunit; part of the 5S rRNA/L5/L18/L25 subcomplex. Contacts the 5S and 23S rRNAs.

Functionally, this is one of the proteins that bind and probably mediate the attachment of the 5S RNA into the large ribosomal subunit, where it forms part of the central protuberance. This chain is Large ribosomal subunit protein uL18, found in Prochlorococcus marinus (strain MIT 9303).